Reading from the N-terminus, the 492-residue chain is Protein GvpD2 (492 aa).

39–46 serves as a coordination point for ATP; that stretch reads GAPGTGKT. Basic and acidic residues predominate over residues 355-368; that stretch reads RDHDDAVDPDRLPG. The disordered stretch occupies residues 355–379; that stretch reads RDHDDAVDPDRLPGHDTTPTEHGTL.

Belongs to the gas vesicle GvpD family. Homodimer. Interacts with GvpE, also with GvpE from H.mediterranei.

It localises to the cytoplasm. In terms of biological role, causes a decrease in the amount of GvpE protein. Gas vesicles are hollow, gas filled proteinaceous nanostructures found in several microbial planktonic microorganisms. They allow positioning of halobacteria at the optimal depth for growth in the poorly aerated, shallow brine pools of their habitat. Functionally, expression of 2 c-vac DNA fragments containing 2 divergently transcribed regions (gvpE-gvpF-gvpG-gvpH-gvpI-gvpJ-gvpK-gvpL-gvpM and gvpA-gvpC-gvpN-gvpO) allows H.volcanii to produce gas vesicles. The protein is Protein GvpD2 of Halobacterium salinarum (strain ATCC 700922 / JCM 11081 / NRC-1) (Halobacterium halobium).